The primary structure comprises 189 residues: UPF0312 protein VPA0850 (189 aa).

The signal sequence occupies residues 1–22 (MKKSLFATGLAIAMALPLGAQA).

This sequence belongs to the UPF0312 family. Type 1 subfamily.

Its subcellular location is the periplasm. This Vibrio parahaemolyticus serotype O3:K6 (strain RIMD 2210633) protein is UPF0312 protein VPA0850.